Consider the following 242-residue polypeptide: Uridylate kinase (242 aa).

Residue 11-14 (KLSG) coordinates ATP. An involved in allosteric activation by GTP region spans residues 19–24 (GDKGVG). Glycine 53 is a UMP binding site. The ATP site is built by glycine 54 and arginine 58. UMP contacts are provided by residues aspartate 73 and 134–141 (IGSPYFST). Asparagine 162, tyrosine 168, and aspartate 171 together coordinate ATP.

This sequence belongs to the UMP kinase family. In terms of assembly, homohexamer.

It is found in the cytoplasm. It catalyses the reaction UMP + ATP = UDP + ADP. It participates in pyrimidine metabolism; CTP biosynthesis via de novo pathway; UDP from UMP (UMPK route): step 1/1. Its activity is regulated as follows. Allosterically activated by GTP. Inhibited by UTP. Its function is as follows. Catalyzes the reversible phosphorylation of UMP to UDP. This Streptococcus agalactiae serotype III (strain NEM316) protein is Uridylate kinase.